We begin with the raw amino-acid sequence, 200 residues long: Large ribosomal subunit protein uL4 (200 aa).

A disordered region spans residues 43 to 71 (RAQKTRAEVSGSGKKPWRQKGTGRARSGD).

It belongs to the universal ribosomal protein uL4 family. In terms of assembly, part of the 50S ribosomal subunit.

In terms of biological role, one of the primary rRNA binding proteins, this protein initially binds near the 5'-end of the 23S rRNA. It is important during the early stages of 50S assembly. It makes multiple contacts with different domains of the 23S rRNA in the assembled 50S subunit and ribosome. Forms part of the polypeptide exit tunnel. The sequence is that of Large ribosomal subunit protein uL4 from Histophilus somni (strain 129Pt) (Haemophilus somnus).